The primary structure comprises 306 residues: Porphobilinogen deaminase (306 aa).

C239 is modified (S-(dipyrrolylmethanemethyl)cysteine).

The protein belongs to the HMBS family. Monomer. Dipyrromethane is required as a cofactor.

The catalysed reaction is 4 porphobilinogen + H2O = hydroxymethylbilane + 4 NH4(+). Its pathway is porphyrin-containing compound metabolism; protoporphyrin-IX biosynthesis; coproporphyrinogen-III from 5-aminolevulinate: step 2/4. Tetrapolymerization of the monopyrrole PBG into the hydroxymethylbilane pre-uroporphyrinogen in several discrete steps. The sequence is that of Porphobilinogen deaminase (hemC) from Helicobacter pylori (strain J99 / ATCC 700824) (Campylobacter pylori J99).